A 59-amino-acid polypeptide reads, in one-letter code: Large ribosomal subunit protein uL30 (59 aa).

Belongs to the universal ribosomal protein uL30 family. As to quaternary structure, part of the 50S ribosomal subunit.

The protein is Large ribosomal subunit protein uL30 of Leptospira borgpetersenii serovar Hardjo-bovis (strain JB197).